The following is a 133-amino-acid chain: Ribonuclease P protein component (133 aa).

The protein belongs to the RnpA family. In terms of assembly, consists of a catalytic RNA component (M1 or rnpB) and a protein subunit.

It catalyses the reaction Endonucleolytic cleavage of RNA, removing 5'-extranucleotides from tRNA precursor.. RNaseP catalyzes the removal of the 5'-leader sequence from pre-tRNA to produce the mature 5'-terminus. It can also cleave other RNA substrates such as 4.5S RNA. The protein component plays an auxiliary but essential role in vivo by binding to the 5'-leader sequence and broadening the substrate specificity of the ribozyme. In Pseudomonas putida (strain ATCC 47054 / DSM 6125 / CFBP 8728 / NCIMB 11950 / KT2440), this protein is Ribonuclease P protein component.